The chain runs to 243 residues: 1-(5-phosphoribosyl)-5-[(5-phosphoribosylamino)methylideneamino] imidazole-4-carboxamide isomerase (243 aa).

The Proton acceptor role is filled by Asp-10. The active-site Proton donor is Asp-131.

Belongs to the HisA/HisF family.

The protein resides in the cytoplasm. It carries out the reaction 1-(5-phospho-beta-D-ribosyl)-5-[(5-phospho-beta-D-ribosylamino)methylideneamino]imidazole-4-carboxamide = 5-[(5-phospho-1-deoxy-D-ribulos-1-ylimino)methylamino]-1-(5-phospho-beta-D-ribosyl)imidazole-4-carboxamide. Its pathway is amino-acid biosynthesis; L-histidine biosynthesis; L-histidine from 5-phospho-alpha-D-ribose 1-diphosphate: step 4/9. This is 1-(5-phosphoribosyl)-5-[(5-phosphoribosylamino)methylideneamino] imidazole-4-carboxamide isomerase from Rhizorhabdus wittichii (strain DSM 6014 / CCUG 31198 / JCM 15750 / NBRC 105917 / EY 4224 / RW1) (Sphingomonas wittichii).